The sequence spans 324 residues: Fibronectin type III domain-containing protein 8 (324 aa).

The 102-residue stretch at 179–280 folds into the Fibronectin type-III domain; sequence PDTPFIFEHT…KPYKFATLAT (102 aa).

The chain is Fibronectin type III domain-containing protein 8 (FNDC8) from Macaca fascicularis (Crab-eating macaque).